A 282-amino-acid polypeptide reads, in one-letter code: Phosphatidylserine decarboxylase proenzyme (282 aa).

Active-site charge relay system; for autoendoproteolytic cleavage activity residues include D88, H144, and S247. The Schiff-base intermediate with substrate; via pyruvic acid; for decarboxylase activity role is filled by S247. A Pyruvic acid (Ser); by autocatalysis modification is found at S247.

It belongs to the phosphatidylserine decarboxylase family. PSD-B subfamily. Prokaryotic type I sub-subfamily. As to quaternary structure, heterodimer of a large membrane-associated beta subunit and a small pyruvoyl-containing alpha subunit. Pyruvate is required as a cofactor. Is synthesized initially as an inactive proenzyme. Formation of the active enzyme involves a self-maturation process in which the active site pyruvoyl group is generated from an internal serine residue via an autocatalytic post-translational modification. Two non-identical subunits are generated from the proenzyme in this reaction, and the pyruvate is formed at the N-terminus of the alpha chain, which is derived from the carboxyl end of the proenzyme. The autoendoproteolytic cleavage occurs by a canonical serine protease mechanism, in which the side chain hydroxyl group of the serine supplies its oxygen atom to form the C-terminus of the beta chain, while the remainder of the serine residue undergoes an oxidative deamination to produce ammonia and the pyruvoyl prosthetic group on the alpha chain. During this reaction, the Ser that is part of the protease active site of the proenzyme becomes the pyruvoyl prosthetic group, which constitutes an essential element of the active site of the mature decarboxylase.

The protein localises to the cell membrane. It carries out the reaction a 1,2-diacyl-sn-glycero-3-phospho-L-serine + H(+) = a 1,2-diacyl-sn-glycero-3-phosphoethanolamine + CO2. The protein operates within phospholipid metabolism; phosphatidylethanolamine biosynthesis; phosphatidylethanolamine from CDP-diacylglycerol: step 2/2. In terms of biological role, catalyzes the formation of phosphatidylethanolamine (PtdEtn) from phosphatidylserine (PtdSer). The polypeptide is Phosphatidylserine decarboxylase proenzyme (Xanthomonas campestris pv. campestris (strain 8004)).